Here is a 709-residue protein sequence, read N- to C-terminus: Polyribonucleotide nucleotidyltransferase (709 aa).

The Mg(2+) site is built by Asp-485 and Asp-491. A KH domain is found at 552-611; the sequence is PRIHTMKIDPKKIKDVIGKGGATIRALTEETGTSIDIDDDGTVKIAATDNNAAKRVMERI. One can recognise an S1 motif domain in the interval 621–689; the sequence is NAIYKGKVTR…RQGRIRLTMK (69 aa).

The protein belongs to the polyribonucleotide nucleotidyltransferase family. In terms of assembly, component of the RNA degradosome, which is a multiprotein complex involved in RNA processing and mRNA degradation. It depends on Mg(2+) as a cofactor.

The protein resides in the cytoplasm. It carries out the reaction RNA(n+1) + phosphate = RNA(n) + a ribonucleoside 5'-diphosphate. In terms of biological role, involved in mRNA degradation. Catalyzes the phosphorolysis of single-stranded polyribonucleotides processively in the 3'- to 5'-direction. The polypeptide is Polyribonucleotide nucleotidyltransferase (Glaesserella parasuis serovar 5 (strain SH0165) (Haemophilus parasuis)).